A 443-amino-acid chain; its full sequence is Dynein regulatory complex protein 9 (443 aa).

2 disordered regions span residues 1 to 34 and 415 to 443; these read MEEDSLEDSNLPPKVWHSEMTVSVTGEPPSTVEE and GFKMPKDKVDSKDSKGKGKGKDKRRGKKK. An IQ domain is found at 393–422; it reads ELKSVIKLQAWWRGTMIRREIGGFKMPKDK. Over residues 415 to 430 the composition is skewed to basic and acidic residues; it reads GFKMPKDKVDSKDSKG. Residues 431–443 show a composition bias toward basic residues; sequence KGKGKDKRRGKKK.

The protein belongs to the DRC9 family. Component of the nexin-dynein regulatory complex (N-DRC). Interacts (via IQ domain) with CALM when calcium levels are low. Does not interact with CALM in the presence of Ca(2+). Interacts with the HSP70 proteins HSPA1L and HSPA8. May form a complex with CAMK4 and HSP70.

Its subcellular location is the cytoplasm. It is found in the cell projection. The protein localises to the cilium. The protein resides in the flagellum. It localises to the cytoskeleton. Its subcellular location is the flagellum axoneme. Its function is as follows. Component of the nexin-dynein regulatory complex (N-DRC), a key regulator of ciliary/flagellar motility which maintains the alignment and integrity of the distal axoneme and regulates microtubule sliding in motile axonemes. Binds calmodulin when cellular Ca(2+) levels are low and thereby contributes to the regulation of calcium and calmodulin-dependent protein kinase IV (CAMK4) activity; contributes to the regulation of CAMK4 signaling cascades. Required for normal axoneme assembly in sperm flagella, normal sperm tail formation and for male fertility. This chain is Dynein regulatory complex protein 9 (IQCG), found in Homo sapiens (Human).